The primary structure comprises 399 residues: Protein TWIN LOV 1 (399 aa).

One can recognise a PAS 1 domain in the interval 26-97 (LWIKEALEEL…MEIREAIREE (72 aa)). The PAC 1 domain occupies 98 to 153 (RSVQVSLLNYRKSGSPFWMLFHMCPVFGKDDGKVTNFVAVQVPISGREHHRKKLRN). The 72-residue stretch at 249–320 (SLVISLGRIK…EMKECILKGQ (72 aa)) folds into the PAS 2 domain. Cysteine 296 carries the S-4a-FMN cysteine modification. Residues 320–376 (QSCTVQILNYSNRKDKSSFWNLLHISPVRNASGKTAYFVGVQVEASCRNTEIKELRP) enclose the PAC 2 domain.

Interacts with VTC2, VTC5 and BLH10. In terms of processing, FMN binds covalently to cysteine after exposure to blue light and is reversed in the dark.

The protein is Protein TWIN LOV 1 (TLP1) of Arabidopsis thaliana (Mouse-ear cress).